Consider the following 238-residue polypeptide: uncharacterized protein (238 aa).

The region spanning 1–68 is the HTH gntR-type domain; sequence MIYKSIAERL…HGSGTYLVRK (68 aa). The H-T-H motif DNA-binding region spans 28 to 47; the sequence is EKKLAEEFAVSRMTIRKAID.

This is an uncharacterized protein from Escherichia coli (strain K12).